Reading from the N-terminus, the 666-residue chain is Spartin (666 aa).

Methionine 1 is subject to N-acetylmethionine. An MIT domain is found at 16-94 (IREAYKKAFL…LQNVRTRLEI (79 aa)). Positions 124–156 (EKLPEPQSFSSAPQHAEVNGNTSTPSAGAVAAP) are disordered. Positions 146–156 (STPSAGAVAAP) are enriched in low complexity. The interval 190-380 (DSGEFSSVGE…QLDQGNKDVR (191 aa)) is ubiquitin-binding region (UBR) domain. An LC3-interacting region (LIR); mediates interaction with MAP1LC3A AND MAP1LC3C motif is present at residues 193-200 (EFSSVGEE). The tract at residues 344-398 (EENEFQIPGRTRPSSDQLKEASGTDVKQLDQGNKDVRHKGKRGKRAKDTSSEEVN) is disordered. A Glycyl lysine isopeptide (Lys-Gly) (interchain with G-Cter in ubiquitin) cross-link involves residue lysine 362. Basic residues predominate over residues 379-388 (VRHKGKRGKR). One can recognise a Senescence domain in the interval 427 to 611 (ILSGASWVSW…YNINNIGIKA (185 aa)). Residues 431–503 (ASWVSWGLVK…LVDGVCTVAN (73 aa)) form a required for localization to lipid droplets region. Position 470 is a phosphoserine (serine 470). The segment at 636–666 (RENQEGAANVNVRGEKDEQTKEVKEAKKKDK) is disordered. Residues 648–666 (RGEKDEQTKEVKEAKKKDK) show a composition bias toward basic and acidic residues.

Interacts with ITCH and WWP1. Interacts (via MIT domain) with IST1; leading to the recruitment of SPART to midbodies. Interacts with MAP1LC3A and MAP1LC3C. In terms of processing, ubiquitinated; ubiquitination does not require ITCH and WWP1. In terms of tissue distribution, ubiquitously expressed, with highest levels of expression detected in adipose tissue.

The protein localises to the cytoplasm. The protein resides in the midbody. It localises to the lipid droplet. Its function is as follows. Lipophagy receptor that plays an important role in lipid droplet (LD) turnover in motor neurons. Localizes to LDs and interacts with components of the autophagy machinery, such as MAP1LC3A/C proteins to deliver LDs to autophagosomes for degradation via lipophagy. Lipid transfer protein required for lipid droplet degradation, including by lipophagy. Can bind and transfer all lipid species found in lipid droplets, from phospholipids to triglycerides and sterol esters but the direction of lipid transfer by spartin and its cargos are unknown. May be implicated in endosomal trafficking, or microtubule dynamics, or both. Participates in cytokinesis. The sequence is that of Spartin from Homo sapiens (Human).